The sequence spans 256 residues: Tyrosine-protein kinase-interacting protein (256 aa).

A compositionally biased stretch (acidic residues) spans 1–14 (MANEGEEIELTEFP). Residues 1–49 (MANEGEEIELTEFPETEKERKDEEKLSSCSEETTNTSSSSGSDHVPVPI) form a disordered region. Residues 1 to 228 (MANEGEEIEL…DLKRLENKIN (228 aa)) lie on the Cytoplasmic side of the membrane. Positions 15 to 26 (ETEKERKDEEKL) are enriched in basic and acidic residues. Low complexity predominate over residues 27-42 (SSCSEETTNTSSSSGS). Y114 carries the phosphotyrosine; by host LCK modification. Phosphotyrosine; by host is present on Y127. The tract at residues 146-155 (EDLQSFLEKY) is CSKH/LBD2. Positions 162–183 (PKRDLSATWDPGMPTPPLPPRP) are disordered. The interval 174–183 (MPTPPLPPRP) is SH3B/LBD1. Positions 174–183 (MPTPPLPPRP) are enriched in pro residues. Residues 229–249 (VIICLVVVILAVLLLVTVLSI) traverse the membrane as a helical segment. At 250–256 (LHIGMKS) the chain is on the extracellular side.

Binds host LCK, human WDR48 and human NXF1/TAP. Forms a complex with activated LCK and STAT1 and STAT3. Phosphorylation on Tyr-114 acts as a docking site for the recruitment of STATs 1 and 3.

It is found in the host cell membrane. Plays a critical role in virus induced T-cell transformation. Binds to T-cell-specific tyrosine kinase LCK SH2 and SH3 domains, thereby activating its kinase activity. Once phosphorylated by host LCK, forms a complex with at least STAT 1 and 3, resulting on the phosphorylation of STAT3 and presumably STAT1, and their migration into the nucleus to induce transcription of target genes. Stimulates host ILF3/NF-AT-90 activity. Association with host NXF1/TAP transduces the signal up-regulating surface expression of adhesion molecules as well as activating NF-kappa-B activity. Acts synergistically with StpC to stimulate NF-kappa-B activity and interleukin-2 gene expression. Activation of NF-kappa-B protects lymphocytes from apoptosis, thereby facilitating viral induced cell transformation. May cause down-regulation of host LCK and cell apoptosis when stably overexpressed ex vivo. Interaction with WDR48 induce degradation of T-cell receptor in a lysosome-dependent fashion, when both proteins are overexpressed. The biological effect of this interaction remains controversial since no T-cell receptor degradation is observed in infected cells. The protein is Tyrosine-protein kinase-interacting protein of Saimiri sciureus (Common squirrel monkey).